The sequence spans 369 residues: Anhydro-N-acetylmuramic acid kinase (369 aa).

Residue 12–19 (GTSMDGVD) participates in ATP binding.

This sequence belongs to the anhydro-N-acetylmuramic acid kinase family.

The enzyme catalyses 1,6-anhydro-N-acetyl-beta-muramate + ATP + H2O = N-acetyl-D-muramate 6-phosphate + ADP + H(+). Its pathway is amino-sugar metabolism; 1,6-anhydro-N-acetylmuramate degradation. The protein operates within cell wall biogenesis; peptidoglycan recycling. In terms of biological role, catalyzes the specific phosphorylation of 1,6-anhydro-N-acetylmuramic acid (anhMurNAc) with the simultaneous cleavage of the 1,6-anhydro ring, generating MurNAc-6-P. Is required for the utilization of anhMurNAc either imported from the medium or derived from its own cell wall murein, and thus plays a role in cell wall recycling. In Shewanella baltica (strain OS223), this protein is Anhydro-N-acetylmuramic acid kinase.